Here is a 229-residue protein sequence, read N- to C-terminus: Ribonuclease 3 (229 aa).

Residues 5–127 form the RNase III domain; the sequence is LSRLERKLGH…LIGAIYLDAG (123 aa). Glu40 is a Mg(2+) binding site. The active site involves Asp44. Asp113 and Glu116 together coordinate Mg(2+). Residue Glu116 is part of the active site. In terms of domain architecture, DRBM spans 154–224; that stretch reads DPKTRLQEFL…AAAALIALGV (71 aa).

It belongs to the ribonuclease III family. Homodimer. Requires Mg(2+) as cofactor.

It is found in the cytoplasm. It catalyses the reaction Endonucleolytic cleavage to 5'-phosphomonoester.. In terms of biological role, digests double-stranded RNA. Involved in the processing of primary rRNA transcript to yield the immediate precursors to the large and small rRNAs (23S and 16S). Processes some mRNAs, and tRNAs when they are encoded in the rRNA operon. Processes pre-crRNA and tracrRNA of type II CRISPR loci if present in the organism. The protein is Ribonuclease 3 of Ectopseudomonas mendocina (strain ymp) (Pseudomonas mendocina).